An 865-amino-acid chain; its full sequence is SWI/SNF chromatin-remodeling complex subunit sol1 (865 aa).

Disordered regions lie at residues 1–34, 54–92, 116–143, and 163–183; these read MNNQGFVPASDYPTAVSYPTQGQSYNTQEEQPAY, MMNTSENEPNNLAHSQPFRQSPSTQRNLPNQSFDFASNG, QEKEAAMQQQQQQQQQQQLYQRQMQSRE, and VRQTPQPAPSPNTPSGNANQL. The segment covering 17 to 30 has biased composition (polar residues); it reads SYPTQGQSYNTQEE. A compositionally biased stretch (low complexity) spans 121 to 139; sequence AMQQQQQQQQQQQLYQRQM. In terms of domain architecture, ARID spans 188-278; sequence AASFDKFMVS…YLLPYEEAWL (91 aa). The segment at 288–380 is disordered; it reads QQAKANHSAN…QTSSSAAPVD (93 aa). Polar residues predominate over residues 328 to 353; sequence HSKSPSPAFTANRFSPAAPTTVSSER. Positions 356-368 are enriched in pro residues; sequence PPYPSAPTRPTPP. Phosphoserine is present on residues serine 852 and serine 855.

It belongs to the SWI1 family. Component of the SWI/SNF global transcription activator complex composed of at least arp9, arp42, snf5, snf22, snf30, sbf59, sol1, ssr1, ssr2, ssr3, ssr4 and tfg3.

Its subcellular location is the nucleus. Component of the SWI/SNF complex, an ATP-dependent chromatin remodeling complex, required for the positive and negative regulation of gene expression of a large number of genes. It changes chromatin structure by altering DNA-histone contacts within a nucleosome, leading eventually to a change in nucleosome position, thus facilitating or repressing binding of gene-specific transcription factors. The sequence is that of SWI/SNF chromatin-remodeling complex subunit sol1 (sol1) from Schizosaccharomyces pombe (strain 972 / ATCC 24843) (Fission yeast).